A 196-amino-acid chain; its full sequence is MANIVFIDNFDSFTYNLVDQFRSLGHSVKIYRNHIPAETIEQAINELENPVVLLSPGPGAPSEAGSMPELIQRMKGKVPMIGICLGHQAIVEAYGGTVAGAGEIIHGKVSMMEHQDHAIYQNLPSPLAIARYHSLVATKVPDSLTITAEVDNLVMSVVHEQDKVCGFQFHPESIMTTYGATLLGNAIEWALEKNNA.

Residues Asn3–Ala196 form the Glutamine amidotransferase type-1 domain. Gly57–Gly59 is an L-glutamine binding site. Cys84 (nucleophile; for GATase activity) is an active-site residue. L-glutamine-binding positions include Gln88 and Ser134–Leu135. Active-site for GATase activity residues include His170 and Glu172.

In terms of assembly, heterotetramer consisting of two non-identical subunits: a beta subunit (TrpG) and a large alpha subunit (TrpE).

The enzyme catalyses chorismate + L-glutamine = anthranilate + pyruvate + L-glutamate + H(+). It participates in amino-acid biosynthesis; L-tryptophan biosynthesis; L-tryptophan from chorismate: step 1/5. In terms of biological role, part of a heterotetrameric complex that catalyzes the two-step biosynthesis of anthranilate, an intermediate in the biosynthesis of L-tryptophan. In the first step, the glutamine-binding beta subunit (TrpG) of anthranilate synthase (AS) provides the glutamine amidotransferase activity which generates ammonia as a substrate that, along with chorismate, is used in the second step, catalyzed by the large alpha subunit of AS (TrpE) to produce anthranilate. In the absence of TrpG, TrpE can synthesize anthranilate directly from chorismate and high concentrations of ammonia. The protein is Anthranilate synthase component 2 (trpG) of Vibrio parahaemolyticus serotype O3:K6 (strain RIMD 2210633).